We begin with the raw amino-acid sequence, 189 residues long: dCTP deaminase, dUMP-forming (189 aa).

Residues 101–106 (KSSLGR), aspartate 119, 127–129 (TLE), glutamine 148, tyrosine 162, and glutamine 174 contribute to the dCTP site. Glutamate 129 acts as the Proton donor/acceptor in catalysis. The disordered stretch occupies residues 166 to 189 (AVGSKYQGQRGPTPSRSHLNFIKS). Polar residues predominate over residues 171–189 (YQGQRGPTPSRSHLNFIKS).

Belongs to the dCTP deaminase family. In terms of assembly, homotrimer.

It carries out the reaction dCTP + 2 H2O = dUMP + NH4(+) + diphosphate. The protein operates within pyrimidine metabolism; dUMP biosynthesis; dUMP from dCTP: step 1/1. Its function is as follows. Bifunctional enzyme that catalyzes both the deamination of dCTP to dUTP and the hydrolysis of dUTP to dUMP without releasing the toxic dUTP intermediate. The chain is dCTP deaminase, dUMP-forming from Mycolicibacterium smegmatis (strain ATCC 700084 / mc(2)155) (Mycobacterium smegmatis).